We begin with the raw amino-acid sequence, 607 residues long: Elongation factor 4 (607 aa).

The tr-type G domain maps to Lys-11–Thr-193. GTP contacts are provided by residues Asp-23–Thr-28 and Asn-140–Asp-143.

It belongs to the TRAFAC class translation factor GTPase superfamily. Classic translation factor GTPase family. LepA subfamily.

Its subcellular location is the cell membrane. The catalysed reaction is GTP + H2O = GDP + phosphate + H(+). Functionally, required for accurate and efficient protein synthesis under certain stress conditions. May act as a fidelity factor of the translation reaction, by catalyzing a one-codon backward translocation of tRNAs on improperly translocated ribosomes. Back-translocation proceeds from a post-translocation (POST) complex to a pre-translocation (PRE) complex, thus giving elongation factor G a second chance to translocate the tRNAs correctly. Binds to ribosomes in a GTP-dependent manner. This is Elongation factor 4 from Exiguobacterium sibiricum (strain DSM 17290 / CCUG 55495 / CIP 109462 / JCM 13490 / 255-15).